A 172-amino-acid polypeptide reads, in one-letter code: Large ribosomal subunit protein uL10 (172 aa).

It belongs to the universal ribosomal protein uL10 family. As to quaternary structure, part of the ribosomal stalk of the 50S ribosomal subunit. The N-terminus interacts with L11 and the large rRNA to form the base of the stalk. The C-terminus forms an elongated spine to which L12 dimers bind in a sequential fashion forming a multimeric L10(L12)X complex.

Functionally, forms part of the ribosomal stalk, playing a central role in the interaction of the ribosome with GTP-bound translation factors. This chain is Large ribosomal subunit protein uL10, found in Mesorhizobium japonicum (strain LMG 29417 / CECT 9101 / MAFF 303099) (Mesorhizobium loti (strain MAFF 303099)).